The primary structure comprises 31 residues: Conotoxin pc6d (31 aa).

Disulfide bonds link cysteine 2–cysteine 20, cysteine 9–cysteine 25, and cysteine 19–cysteine 29.

This sequence belongs to the conotoxin O1 superfamily. Expressed by the venom duct.

Its subcellular location is the secreted. In Conus pictus (Cone snail), this protein is Conotoxin pc6d.